The following is a 404-amino-acid chain: Cysteine desulfurase IscS (404 aa).

Pyridoxal 5'-phosphate contacts are provided by residues 75–76, Asn155, Gln183, and 203–205; these read AT and SAH. Residue Lys206 is modified to N6-(pyridoxal phosphate)lysine. Thr243 is a pyridoxal 5'-phosphate binding site. Cys328 acts as the Cysteine persulfide intermediate in catalysis. Cys328 serves as a coordination point for [2Fe-2S] cluster.

This sequence belongs to the class-V pyridoxal-phosphate-dependent aminotransferase family. NifS/IscS subfamily. Homodimer. Forms a heterotetramer with IscU, interacts with other sulfur acceptors. Pyridoxal 5'-phosphate is required as a cofactor.

It localises to the cytoplasm. It catalyses the reaction (sulfur carrier)-H + L-cysteine = (sulfur carrier)-SH + L-alanine. Its pathway is cofactor biosynthesis; iron-sulfur cluster biosynthesis. Functionally, master enzyme that delivers sulfur to a number of partners involved in Fe-S cluster assembly, tRNA modification or cofactor biosynthesis. Catalyzes the removal of elemental sulfur atoms from cysteine to produce alanine. Functions as a sulfur delivery protein for Fe-S cluster synthesis onto IscU, an Fe-S scaffold assembly protein, as well as other S acceptor proteins. This is Cysteine desulfurase IscS from Neisseria meningitidis serogroup C (strain 053442).